The following is a 338-amino-acid chain: Anthranilate phosphoribosyltransferase (338 aa).

5-phospho-alpha-D-ribose 1-diphosphate is bound by residues Gly81, 84 to 85, Thr89, 91 to 94, 109 to 117, and Ala121; these read GD, NIST, and KHGNRNLSS. Residue Gly81 coordinates anthranilate. Residue Ser93 coordinates Mg(2+). Asn112 is a binding site for anthranilate. Arg167 provides a ligand contact to anthranilate. Mg(2+)-binding residues include Asp226 and Glu227.

Belongs to the anthranilate phosphoribosyltransferase family. As to quaternary structure, homodimer. Mg(2+) is required as a cofactor.

The enzyme catalyses N-(5-phospho-beta-D-ribosyl)anthranilate + diphosphate = 5-phospho-alpha-D-ribose 1-diphosphate + anthranilate. It participates in amino-acid biosynthesis; L-tryptophan biosynthesis; L-tryptophan from chorismate: step 2/5. Catalyzes the transfer of the phosphoribosyl group of 5-phosphorylribose-1-pyrophosphate (PRPP) to anthranilate to yield N-(5'-phosphoribosyl)-anthranilate (PRA). The chain is Anthranilate phosphoribosyltransferase from Cereibacter sphaeroides (strain ATCC 17029 / ATH 2.4.9) (Rhodobacter sphaeroides).